The following is a 411-amino-acid chain: Serine/threonine transporter SstT (411 aa).

Helical transmembrane passes span 17 to 37 (IMVG…TASA), 41 to 61 (LGAL…LVLV), 79 to 99 (ILFL…VVSF), 138 to 158 (ALIS…GLAL), 189 to 209 (LGIF…ALWG), 214 to 234 (LVVL…LIVF), 295 to 315 (MAGA…TLGI), and 327 to 347 (VVAA…LLLI).

Belongs to the dicarboxylate/amino acid:cation symporter (DAACS) (TC 2.A.23) family.

The protein resides in the cell inner membrane. The enzyme catalyses L-serine(in) + Na(+)(in) = L-serine(out) + Na(+)(out). It catalyses the reaction L-threonine(in) + Na(+)(in) = L-threonine(out) + Na(+)(out). In terms of biological role, involved in the import of serine and threonine into the cell, with the concomitant import of sodium (symport system). This chain is Serine/threonine transporter SstT, found in Serratia proteamaculans (strain 568).